The following is a 169-amino-acid chain: Transmembrane protein 89 (169 aa).

A signal peptide spans 1–22; the sequence is MLYTLLLVPSLFLLVMPVPSQG. Residues 23-75 are Extracellular-facing; sequence WSRPLWYQVGLDLQPWGCQPNSPDIWGCQPNSLDSCKNSLGCPGYWLGLGGNR. The chain crosses the membrane as a helical span at residues 76–96; the sequence is IYPVAGVTITTTMLLVVSRVI. The Cytoplasmic segment spans residues 97–169; sequence VHRWRAKVAK…QIKGSPPQSG (73 aa).

Its subcellular location is the membrane. This is Transmembrane protein 89 (Tmem89) from Mus musculus (Mouse).